A 596-amino-acid chain; its full sequence is Delta(24(24(1)))-sterol reductase (596 aa).

The disordered stretch occupies residues 1-122; that stretch reads MSSRYSLRQT…GHATNGHATS (122 aa). A compositionally biased stretch (gly residues) spans 98–112; the sequence is NGNGNGYTNGHGNGN. 8 consecutive transmembrane segments (helical) span residues 168-188, 225-245, 269-289, 296-316, 353-373, 381-401, 419-439, and 454-474; these read FGTAAMMTLFPVLMWYMWIGA, VWAWYWSYLIVEGAFYCLLPG, WSLYTTLACLAGLHYSGIWPL, FGPLLSVAILSGFLVSIVAYF, MFFEVRMPWYILLILSLGTAA, YVSGEVWFLVMAHFLYANACA, GFMLIFWNLAGVPLSYCHCTI, and GILAAMFVGYLFWYWVWDSCN. NADP(+) contacts are provided by residues lysine 477, arginine 481, leucine 516, and 528–529; that span reads HY. Residues 535 to 557 form a helical membrane-spanning segment; that stretch reads FAVSWGLITGFESPFPWFYPVFF. NADP(+)-binding positions include aspartate 568, 572-576, and tyrosine 583; that span reads CRRKY.

Belongs to the ERG4/ERG24 family.

It localises to the endoplasmic reticulum membrane. It catalyses the reaction ergosterol + NADP(+) = ergosta-5,7,22,24(28)-tetraen-3beta-ol + NADPH + H(+). It participates in steroid metabolism; ergosterol biosynthesis. In terms of biological role, delta(24(24(1)))-sterol reductase; part of the third module of ergosterol biosynthesis pathway that includes the late steps of the pathway. ERG4 catalyzes the last step of ergosterol biosynthesis by converting ergosta-5,7,22,24(28)-tetraen-3beta-ol into ergosterol. The third module or late pathway involves the ergosterol synthesis itself through consecutive reactions that mainly occur in the endoplasmic reticulum (ER) membrane. Firstly, the squalene synthase ERG9 catalyzes the condensation of 2 farnesyl pyrophosphate moieties to form squalene, which is the precursor of all steroids. Squalene synthase is crucial for balancing the incorporation of farnesyl diphosphate (FPP) into sterol and nonsterol isoprene synthesis. Secondly, squalene is converted into lanosterol by the consecutive action of the squalene epoxidase ERG1 and the lanosterol synthase ERG7. Then, the delta(24)-sterol C-methyltransferase ERG6 methylates lanosterol at C-24 to produce eburicol. Eburicol is the substrate of the sterol 14-alpha demethylase encoded by CYP51A, CYP51B and CYP51C, to yield 4,4,24-trimethyl ergosta-8,14,24(28)-trienol. CYP51B encodes the enzyme primarily responsible for sterol 14-alpha-demethylation, and plays an essential role in ascospore formation. CYP51A encodes an additional sterol 14-alpha-demethylase, induced on ergosterol depletion and responsible for the intrinsic variation in azole sensitivity. The third CYP51 isoform, CYP51C, does not encode a sterol 14-alpha-demethylase, but is required for full virulence on host wheat ears. The C-14 reductase ERG24 then reduces the C14=C15 double bond which leads to 4,4-dimethylfecosterol. A sequence of further demethylations at C-4, involving the C-4 demethylation complex containing the C-4 methylsterol oxidases ERG25, the sterol-4-alpha-carboxylate 3-dehydrogenase ERG26 and the 3-keto-steroid reductase ERG27, leads to the production of fecosterol via 4-methylfecosterol. ERG28 has a role as a scaffold to help anchor ERG25, ERG26 and ERG27 to the endoplasmic reticulum. The C-8 sterol isomerase ERG2 then catalyzes the reaction which results in unsaturation at C-7 in the B ring of sterols and thus converts fecosterol to episterol. The sterol-C5-desaturases ERG3A and ERG3BB then catalyze the introduction of a C-5 double bond in the B ring to produce 5-dehydroepisterol. The C-22 sterol desaturases ERG5A and ERG5B further convert 5-dehydroepisterol into ergosta-5,7,22,24(28)-tetraen-3beta-ol by forming the C-22(23) double bond in the sterol side chain. Finally, ergosta-5,7,22,24(28)-tetraen-3beta-ol is substrate of the C-24(28) sterol reductase ERG4 to produce ergosterol. The chain is Delta(24(24(1)))-sterol reductase from Gibberella zeae (strain ATCC MYA-4620 / CBS 123657 / FGSC 9075 / NRRL 31084 / PH-1) (Wheat head blight fungus).